Here is a 100-residue protein sequence, read N- to C-terminus: Urease subunit gamma (100 aa).

Belongs to the urease gamma subunit family. In terms of assembly, heterotrimer of UreA (gamma), UreB (beta) and UreC (alpha) subunits. Three heterotrimers associate to form the active enzyme.

It localises to the cytoplasm. The enzyme catalyses urea + 2 H2O + H(+) = hydrogencarbonate + 2 NH4(+). The protein operates within nitrogen metabolism; urea degradation; CO(2) and NH(3) from urea (urease route): step 1/1. This Actinobacillus pleuropneumoniae serotype 5b (strain L20) protein is Urease subunit gamma.